We begin with the raw amino-acid sequence, 156 residues long: Endoribonuclease YbeY (156 aa).

Positions 117, 121, and 127 each coordinate Zn(2+).

This sequence belongs to the endoribonuclease YbeY family. It depends on Zn(2+) as a cofactor.

It is found in the cytoplasm. Functionally, single strand-specific metallo-endoribonuclease involved in late-stage 70S ribosome quality control and in maturation of the 3' terminus of the 16S rRNA. This chain is Endoribonuclease YbeY, found in Shewanella pealeana (strain ATCC 700345 / ANG-SQ1).